Consider the following 191-residue polypeptide: NAD(P)H-dependent FMN reductase LOT6 (191 aa).

Residues Arg-11, 94 to 97, and Tyr-124 contribute to the FMN site; that span reads QYNW.

Homodimer.

The protein resides in the cytoplasm. It localises to the nucleus. The enzyme catalyses FMNH2 + NADP(+) = FMN + NADPH + 2 H(+). The catalysed reaction is FMNH2 + NAD(+) = FMN + NADH + 2 H(+). In terms of biological role, has several reductase activities that are NAD(P)H-dependent and involve FMN as a cofactor, ferricyanide being the best substrate for reduction. May be involved in ferric iron assimilation. The sequence is that of NAD(P)H-dependent FMN reductase LOT6 (LOT6) from Saccharomyces cerevisiae (strain ATCC 204508 / S288c) (Baker's yeast).